The following is a 531-amino-acid chain: uncharacterized protein (531 aa).

The first 22 residues, 1–22 (MRLQFKLLGFLTLLGTSTILSA), serve as a signal peptide directing secretion. Residue cysteine 23 is the site of N-palmitoyl cysteine attachment. Cysteine 23 is lipidated: S-diacylglycerol cysteine. A disordered region spans residues 31 to 51 (EPNNIEESGPITPTTPTTDVP). Positions 40-51 (PITPTTPTTDVP) are enriched in low complexity.

Belongs to the MG067/MG068/MG395 family.

The protein resides in the cell membrane. This is an uncharacterized protein from Mycoplasma pneumoniae (strain ATCC 29342 / M129 / Subtype 1) (Mycoplasmoides pneumoniae).